We begin with the raw amino-acid sequence, 471 residues long: Phosphatidylinositol 4-kinase type 2-alpha (471 aa).

2 disordered regions span residues 1-25 (MDET…QCSP) and 48-101 (PGSA…PDDP). A compositionally biased stretch (basic and acidic residues) spans 90–101 (AERERNKFPDDP). Residues 117–445 (DILPERISQG…VQTPPVIVET (329 aa)) form the PI3K/PI4K catalytic domain. Residues 123 to 129 (ISQGSSG) are G-loop. Residues 124 to 130 (SQGSSGS) and Lys145 contribute to the ATP site. The interval 150-152 (EPY) is important for substrate binding. The important for interaction with membranes stretch occupies residues 158-171 (KWTKWLQKLCCPCC). 4 S-palmitoyl cysteine lipidation sites follow: Cys167, Cys168, Cys170, and Cys171. 254–257 (QLFV) is a binding site for ATP. Residues 261–269 (KDADYWLRR) are important for interaction with membranes. Residues 298–306 (RNTDRGNDN) form a catalytic loop region. The segment at 336–356 (AIDNGLAFPLKHPDSWRAYPF) is activation loop. Asp338 is a binding site for ATP. The important for interaction with membranes stretch occupies residues 351-360 (WRAYPFYWAW).

Belongs to the PI3/PI4-kinase family. Type II PI4K subfamily.

It is found in the golgi apparatus. Its subcellular location is the trans-Golgi network membrane. The protein localises to the membrane raft. The protein resides in the endosome. It localises to the endosome membrane. It is found in the cytoplasmic vesicle. Its subcellular location is the cell projection. The protein localises to the dendrite. The protein resides in the presynaptic cell membrane. It localises to the synapse. It is found in the synaptosome. Its subcellular location is the mitochondrion. The protein localises to the membrane. The protein resides in the cell membrane. It localises to the perikaryon. It is found in the neuron projection. The enzyme catalyses a 1,2-diacyl-sn-glycero-3-phospho-(1D-myo-inositol) + ATP = a 1,2-diacyl-sn-glycero-3-phospho-(1D-myo-inositol 4-phosphate) + ADP + H(+). Functionally, membrane-bound phosphatidylinositol-4 kinase (PI4-kinase) that catalyzes the phosphorylation of phosphatidylinositol (PI) to phosphatidylinositol 4-phosphate (PI4P), a lipid that plays important roles in endocytosis, Golgi function, protein sorting and membrane trafficking. Besides, phosphorylation of phosphatidylinositol (PI) to phosphatidylinositol 4-phosphate (PI4P) is the first committed step in the generation of phosphatidylinositol 4,5-bisphosphate (PIP2), a precursor of the second messenger inositol 1,4,5-trisphosphate (InsP3). The sequence is that of Phosphatidylinositol 4-kinase type 2-alpha (pi4k2a) from Xenopus tropicalis (Western clawed frog).